Consider the following 501-residue polypeptide: ATP synthase subunit alpha (501 aa).

169 to 176 (GDRQTGKT) contacts ATP.

It belongs to the ATPase alpha/beta chains family. In terms of assembly, F-type ATPases have 2 components, CF(1) - the catalytic core - and CF(0) - the membrane proton channel. CF(1) has five subunits: alpha(3), beta(3), gamma(1), delta(1), epsilon(1). CF(0) has three main subunits: a(1), b(2) and c(9-12). The alpha and beta chains form an alternating ring which encloses part of the gamma chain. CF(1) is attached to CF(0) by a central stalk formed by the gamma and epsilon chains, while a peripheral stalk is formed by the delta and b chains.

The protein localises to the cell inner membrane. The enzyme catalyses ATP + H2O + 4 H(+)(in) = ADP + phosphate + 5 H(+)(out). Functionally, produces ATP from ADP in the presence of a proton gradient across the membrane. The alpha chain is a regulatory subunit. This is ATP synthase subunit alpha from Campylobacter jejuni subsp. jejuni serotype O:23/36 (strain 81-176).